We begin with the raw amino-acid sequence, 729 residues long: Zorya protein ZorA (729 aa).

3 consecutive transmembrane segments (helical) span residues Pro20 to Phe40, Leu135 to Leu155, and Val177 to Leu197.

It belongs to the MotA family.

It localises to the cell inner membrane. Component of antiviral defense system Zorya type I, composed of ZorA, ZorB, ZorC and ZorD. Expression of Zorya type I in E.coli (strain MG1655) confers 10,000-fold resistance to phage SECphi27, 100-fold resistance to lambda, and 10-fold resistance to T7. While most T7 infected Zorya-containing cells undergo abortive infection, a minority produce viable phage progeny. These eventually accumulate to a high multiplicity of infection, leading to culture collapse by 2 hours after initial infection. ZorA and ZorB probably assemble in the cell inner membrane and exert their effect there. The chain is Zorya protein ZorA from Escherichia coli O139:H28 (strain E24377A / ETEC).